The primary structure comprises 79 residues: Conotoxin ArMSGL-0121 (79 aa).

A signal peptide spans 1-20 (MSRLGIMVLTLLLLVFIVTS). Positions 21–44 (HQDAGEKQATQRNAINFRWRRSFT) are excised as a propeptide. Disulfide bonds link C52/C64, C56/C73, and C63/C77. L78 is modified (leucine amide).

Belongs to the conotoxin O3 superfamily. In terms of tissue distribution, expressed by the venom duct.

Its subcellular location is the secreted. This Conus arenatus (Sand-dusted cone) protein is Conotoxin ArMSGL-0121.